The chain runs to 324 residues: Glutamyl-Q tRNA(Asp) synthetase (324 aa).

L-glutamate contacts are provided by residues 5–9 (RLAPS) and E41. Residues 8–18 (PSPTGNIHLGN) carry the 'HIGH' region motif. Positions 105, 107, 128, and 132 each coordinate Zn(2+). Positions 193 and 211 each coordinate L-glutamate. Residues 249–253 (RLAKR) carry the 'KMSKS' region motif. K252 serves as a coordination point for ATP.

Belongs to the class-I aminoacyl-tRNA synthetase family. GluQ subfamily. It depends on Zn(2+) as a cofactor.

Functionally, catalyzes the tRNA-independent activation of glutamate in presence of ATP and the subsequent transfer of glutamate onto a tRNA(Asp). Glutamate is transferred on the 2-amino-5-(4,5-dihydroxy-2-cyclopenten-1-yl) moiety of the queuosine in the wobble position of the QUC anticodon. The polypeptide is Glutamyl-Q tRNA(Asp) synthetase (Nitratidesulfovibrio vulgaris (strain ATCC 29579 / DSM 644 / CCUG 34227 / NCIMB 8303 / VKM B-1760 / Hildenborough) (Desulfovibrio vulgaris)).